Here is a 119-residue protein sequence, read N- to C-terminus: Large ribosomal subunit protein uL22 (119 aa).

It belongs to the universal ribosomal protein uL22 family. Part of the 50S ribosomal subunit.

Functionally, this protein binds specifically to 23S rRNA; its binding is stimulated by other ribosomal proteins, e.g. L4, L17, and L20. It is important during the early stages of 50S assembly. It makes multiple contacts with different domains of the 23S rRNA in the assembled 50S subunit and ribosome. Its function is as follows. The globular domain of the protein is located near the polypeptide exit tunnel on the outside of the subunit, while an extended beta-hairpin is found that lines the wall of the exit tunnel in the center of the 70S ribosome. This chain is Large ribosomal subunit protein uL22, found in Rickettsia canadensis (strain McKiel).